Reading from the N-terminus, the 98-residue chain is DNA-binding protein Fis (98 aa).

A DNA-binding region (H-T-H motif) is located at residues 74 to 93 (QTRAALMMGINRGTLRKKLK).

It belongs to the transcriptional regulatory Fis family. As to quaternary structure, homodimer.

Functionally, activates ribosomal RNA transcription. Plays a direct role in upstream activation of rRNA promoters. This chain is DNA-binding protein Fis, found in Pectobacterium atrosepticum (strain SCRI 1043 / ATCC BAA-672) (Erwinia carotovora subsp. atroseptica).